Consider the following 194-residue polypeptide: Histone H1.0 (194 aa).

An N-acetylmethionine modification is found at M1. The interval 1–26 is disordered; it reads MTENSTSTPAAKPKRAKAAKKSTDHP. N-acetylthreonine; in Histone H1.0, N-terminally processed is present on T2. Positions 24–97 constitute an H15 domain; it reads DHPKYSDMIV…GASGSFRLAK (74 aa). Position 42 is a citrulline (R42). Residues 86–194 are disordered; the sequence is GVGASGSFRL…SSAKRASKKK (109 aa). S104 is modified (ADP-ribosylserine). Residues 105–194 show a composition bias toward basic residues; the sequence is VAFKKTKKEV…SSAKRASKKK (90 aa).

Belongs to the histone H1/H5 family. In terms of processing, ADP-ribosylated on Ser-104 in response to DNA damage.

The protein resides in the nucleus. Its subcellular location is the chromosome. Functionally, histones H1 are necessary for the condensation of nucleosome chains into higher-order structures. The histones H1.0 are found in cells that are in terminal stages of differentiation or that have low rates of cell division. The protein is Histone H1.0 (H1-0) of Rattus norvegicus (Rat).